A 98-amino-acid chain; its full sequence is Large ribosomal subunit protein uL23 (98 aa).

Belongs to the universal ribosomal protein uL23 family. In terms of assembly, part of the 50S ribosomal subunit. Contacts protein L29, and trigger factor when it is bound to the ribosome.

In terms of biological role, one of the early assembly proteins it binds 23S rRNA. One of the proteins that surrounds the polypeptide exit tunnel on the outside of the ribosome. Forms the main docking site for trigger factor binding to the ribosome. This Saccharophagus degradans (strain 2-40 / ATCC 43961 / DSM 17024) protein is Large ribosomal subunit protein uL23.